Consider the following 291-residue polypeptide: 11-beta-hydroxysteroid dehydrogenase 1 (291 aa).

At 1–7 (MAFMKTH) the chain is on the cytoplasmic side. A helical; Signal-anchor for type II membrane protein transmembrane segment spans residues 8–24 (LLPILGLFMAYYYYSAY). Residues 25–291 (EEFRPEMLQG…TSYSTDGLIN (267 aa)) lie on the Lumenal side of the membrane. Residues 41 to 67 (GASK…TARS), 92 to 93 (TM), and 119 to 121 (NHI) each bind NADP(+). Asn-123 and Asn-162 each carry an N-linked (GlcNAc...) asparagine glycan. Position 170 (Ser-170) interacts with substrate. Tyr-183 functions as the Proton acceptor in the catalytic mechanism. 183–187 (YSASK) contacts NADP(+). Asn-207 carries an N-linked (GlcNAc...) asparagine glycan. 218 to 222 (IDTDT) contacts NADP(+).

It belongs to the short-chain dehydrogenases/reductases (SDR) family. In terms of assembly, homodimer. In terms of tissue distribution, abundantly expressed in the liver, followed by fibroblasts, also detected in the brain, lung, heart, and ovary, and in smaller amounts in kidney, skin, and spleen.

It localises to the endoplasmic reticulum membrane. It catalyses the reaction an 11beta-hydroxysteroid + NADP(+) = an 11-oxosteroid + NADPH + H(+). The enzyme catalyses cortisone + NADPH + H(+) = cortisol + NADP(+). It carries out the reaction corticosterone + NADP(+) = 11-dehydrocorticosterone + NADPH + H(+). The catalysed reaction is a 7beta-hydroxysteroid + NADP(+) = a 7-oxosteroid + NADPH + H(+). It catalyses the reaction 7-oxocholesterol + NADPH + H(+) = 7beta-hydroxycholesterol + NADP(+). The enzyme catalyses chenodeoxycholate + NADP(+) = 7-oxolithocholate + NADPH + H(+). It carries out the reaction 7-oxolithocholate + NADPH + H(+) = ursodeoxycholate + NADP(+). The catalysed reaction is glycochenodeoxycholate + NADP(+) = 7-oxoglycolithocholate + NADPH + H(+). It catalyses the reaction taurochenodeoxycholate + NADP(+) = 7-oxotaurolithocholate + NADPH + H(+). The enzyme catalyses tauroursodeoxycholate + NADP(+) = 7-oxotaurolithocholate + NADPH + H(+). It carries out the reaction glycoursodeoxycholate + NADP(+) = 7-oxoglycolithocholate + NADPH + H(+). The catalysed reaction is 7-oxopregnenolone + NADPH + H(+) = 7beta-hydroxypregnenolone + NADP(+). It catalyses the reaction 3beta,7alpha-dihydroxyandrost-5-en-17-one + NADP(+) = 3beta-hydroxy-5-androstene-7,17-dione + NADPH + H(+). The enzyme catalyses 3beta-hydroxy-5-androstene-7,17-dione + NADPH + H(+) = 3beta,7beta-dihydroxyandrost-5-en-17-one + NADP(+). It carries out the reaction 3beta-hydroxy-5alpha-androstane-7,17-dione + NADPH + H(+) = 3beta,7beta-dihydroxy-5alpha-androstan-17-one + NADP(+). The protein operates within steroid metabolism. Its function is as follows. Controls the reversible conversion of biologically active glucocorticoids such as cortisone to cortisol, and 11-dehydrocorticosterone to corticosterone in the presence of NADP(H). Participates in the corticosteroid receptor-mediated anti-inflammatory response, as well as metabolic and homeostatic processes. Bidirectional in vitro, predominantly functions as a reductase in vivo, thereby increasing the concentration of active glucocorticoids. It has broad substrate specificity, besides glucocorticoids, it accepts other steroid and sterol substrates. Interconverts 7-oxo- and 7-hydroxy-neurosteroids such as 7-oxopregnenolone and 7beta-hydroxypregnenolone, 7-oxodehydroepiandrosterone (3beta-hydroxy-5-androstene-7,17-dione) and 7beta-hydroxydehydroepiandrosterone (3beta,7beta-dihydroxyandrost-5-en-17-one), among others. Catalyzes the stereo-specific conversion of the major dietary oxysterol, 7-ketocholesterol (7-oxocholesterol), into the more polar 7-beta-hydroxycholesterol metabolite. 7-oxocholesterol is one of the most important oxysterols, it participates in several events such as induction of apoptosis, accumulation in atherosclerotic lesions, lipid peroxidation, and induction of foam cell formation. Mediates the 7-oxo reduction of 7-oxolithocholate mainly to chenodeoxycholate, and to a lesser extent to ursodeoxycholate, both in its free form and when conjugated to glycine or taurine, providing a link between glucocorticoid activation and bile acid metabolism. Catalyzes the synthesis of 7-beta-25-dihydroxycholesterol from 7-oxo-25-hydroxycholesterol in vitro, which acts as a ligand for the G-protein-coupled receptor (GPCR) Epstein-Barr virus-induced gene 2 (EBI2) and may thereby regulate immune cell migration. The sequence is that of 11-beta-hydroxysteroid dehydrogenase 1 (HSD11B1) from Saimiri sciureus (Common squirrel monkey).